A 274-amino-acid chain; its full sequence is 5'-nucleotidase SurE (274 aa).

A divalent metal cation-binding residues include D12, D13, S45, and N103.

The protein belongs to the SurE nucleotidase family. A divalent metal cation is required as a cofactor.

It is found in the cytoplasm. The catalysed reaction is a ribonucleoside 5'-phosphate + H2O = a ribonucleoside + phosphate. Functionally, nucleotidase that shows phosphatase activity on nucleoside 5'-monophosphates. The sequence is that of 5'-nucleotidase SurE from Chlamydia felis (strain Fe/C-56) (Chlamydophila felis).